The chain runs to 176 residues: Zinc finger A20 and AN1 domain-containing stress-associated protein 9 (176 aa).

Residues 16–50 (ASEPKLCVKGCGFFGSPSNMDLCSKCYRGICAEEA) form an A20-type zinc finger. Residues C22, C26, C38, C41, C117, C120, C131, C133, C138, H141, H147, and C149 each coordinate Zn(2+). An AN1-type zinc finger spans residues 111–157 (PARTNRCLCCNKKVGIMGFKCKCGSTFCGEHRYPETHDCSFDFKEVG).

May be involved in environmental stress response. This Arabidopsis thaliana (Mouse-ear cress) protein is Zinc finger A20 and AN1 domain-containing stress-associated protein 9 (SAP9).